Here is a 681-residue protein sequence, read N- to C-terminus: PTS system glucose-specific EIICBA component (681 aa).

The 412-residue stretch at 3-414 folds into the PTS EIIC type-1 domain; it reads KKLFGQLQRI…LKYKTPGRED (412 aa). Transmembrane regions (helical) follow at residues 16-36, 73-93, 126-146, 170-190, 199-219, 273-293, 303-323, 328-348, 355-375, and 383-403; these read LMLP…GTAM, MIFA…AAIA, ILGI…GALA, FVPI…ALIW, AFST…FGFI, FMQG…LAIY, VVAG…ITEP, FLFV…LSFL, LHLG…GILP, and VIPV…FLIV. One can recognise a PTS EIIB type-1 domain in the interval 425–506; the sequence is TELPYAVLEA…QQIMNGQVVE (82 aa). The active-site Phosphocysteine intermediate; for EIIB activity is the Cys-447. The PTS EIIA type-1 domain occupies 551–655; that stretch reads DQVFSEKMMG…SDITPIIVTQ (105 aa). The active-site Tele-phosphohistidine intermediate; for EIIA activity is His-603.

Its subcellular location is the cell membrane. It catalyses the reaction N(pros)-phospho-L-histidyl-[protein] + D-glucose(out) = D-glucose 6-phosphate(in) + L-histidyl-[protein]. Functionally, the phosphoenolpyruvate-dependent sugar phosphotransferase system (sugar PTS), a major carbohydrate active transport system, catalyzes the phosphorylation of incoming sugar substrates concomitantly with their translocation across the cell membrane. This system is involved in glucose transport. The polypeptide is PTS system glucose-specific EIICBA component (ptsG) (Staphylococcus aureus (strain MRSA252)).